The primary structure comprises 158 residues: Urease accessory protein UreE (158 aa).

Belongs to the UreE family.

The protein localises to the cytoplasm. In terms of biological role, involved in urease metallocenter assembly. Binds nickel. Probably functions as a nickel donor during metallocenter assembly. The chain is Urease accessory protein UreE from Klebsiella pneumoniae (strain 342).